Consider the following 342-residue polypeptide: Isopentenyl-diphosphate delta-isomerase (342 aa).

11–12 (RK) contacts substrate. Residues serine 68, 69 to 71 (SMT), serine 99, and asparagine 128 contribute to the FMN site. Substrate is bound at residue 99 to 101 (SQR). Glutamine 162 provides a ligand contact to substrate. Glutamate 163 lines the Mg(2+) pocket. FMN-binding positions include lysine 194, serine 219, threonine 224, 275–277 (GVR), and 296–297 (AK).

Belongs to the IPP isomerase type 2 family. Homooctamer. Dimer of tetramers. Requires FMN as cofactor. The cofactor is NADPH. Mg(2+) serves as cofactor.

The protein localises to the cytoplasm. It catalyses the reaction isopentenyl diphosphate = dimethylallyl diphosphate. Functionally, involved in the biosynthesis of isoprenoids. Catalyzes the 1,3-allylic rearrangement of the homoallylic substrate isopentenyl (IPP) to its allylic isomer, dimethylallyl diphosphate (DMAPP). The sequence is that of Isopentenyl-diphosphate delta-isomerase from Legionella pneumophila subsp. pneumophila (strain Philadelphia 1 / ATCC 33152 / DSM 7513).